The primary structure comprises 69 residues: uncharacterized protein (69 aa).

2 consecutive 4Fe-4S ferredoxin-type domains span residues 2–30 (KIEINENFCKGCDICIVVCPRGVFEKSKK) and 38–67 (PPIPVNPEKCTKCNLCILQCPDQAISIELS). 8 residues coordinate [4Fe-4S] cluster: Cys10, Cys13, Cys16, Cys20, Cys47, Cys50, Cys53, and Cys57.

[4Fe-4S] cluster serves as cofactor.

This is an uncharacterized protein from Methanocaldococcus jannaschii (strain ATCC 43067 / DSM 2661 / JAL-1 / JCM 10045 / NBRC 100440) (Methanococcus jannaschii).